The primary structure comprises 609 residues: Arginine--tRNA ligase (609 aa).

Positions 132–142 (ANPTSSLHVGH) match the 'HIGH' region motif.

It belongs to the class-I aminoacyl-tRNA synthetase family. As to quaternary structure, monomer.

It localises to the cytoplasm. It catalyses the reaction tRNA(Arg) + L-arginine + ATP = L-arginyl-tRNA(Arg) + AMP + diphosphate. This chain is Arginine--tRNA ligase, found in Psychrobacter cryohalolentis (strain ATCC BAA-1226 / DSM 17306 / VKM B-2378 / K5).